The primary structure comprises 91 residues: Small ribosomal subunit protein uS17 (91 aa).

Belongs to the universal ribosomal protein uS17 family. As to quaternary structure, part of the 30S ribosomal subunit.

Its function is as follows. One of the primary rRNA binding proteins, it binds specifically to the 5'-end of 16S ribosomal RNA. This chain is Small ribosomal subunit protein uS17, found in Salinispora arenicola (strain CNS-205).